The chain runs to 738 residues: Flowering time control protein FCA (738 aa).

The tract at residues Met1–Arg118 is disordered. 2 stretches are compositionally biased toward gly residues: residues Arg52–Arg70 and Ser81–Gly98. Basic and acidic residues predominate over residues Arg109–Arg118. 2 consecutive RRM domains span residues Val122 to Gly203 and His213 to Pro293. 2 disordered regions span residues Asp292–Leu414 and Gln566–Pro594. The span at Ser301–Gly311 shows a compositional bias: gly residues. Positions His342–Ser358 are enriched in polar residues. Positions Thr368–Thr377 are enriched in low complexity. Composition is skewed to polar residues over residues Phe383–Met401 and Pro575–Pro594. The region spanning Val609–Glu642 is the WW domain. Residues Met670 to Ser738 form a disordered region. Positions Pro683 to Gln706 are enriched in low complexity. Over residues Arg723–Gln732 the composition is skewed to polar residues.

Interacts with FY. Binds to SF1, FIK, RPRD1B, Os09g0509000/LOC_Os09g33480 and MADS8. In terms of tissue distribution, mostly expressed in young flowers (panicles) and stems, and also present in young seedlings leaves and roots.

It is found in the nucleus. In terms of biological role, plays a major role in the promotion of the transition of the vegetative meristem to reproductive development. Required for RNA-mediated chromatin silencing of a range of loci in the genome. Cotranscriptionally recognizes aberrant RNA and marks it for silencing. Controls alternative cleavage and polyadenylation on pre-mRNAs and antisense RNAs. Regulates flowering time, seed size and cell volume, probably via the modulation of cell size. The sequence is that of Flowering time control protein FCA from Oryza sativa subsp. japonica (Rice).